The sequence spans 1299 residues: Cilia- and flagella-associated protein 251 (1299 aa).

Residues 1-351 (MSDTEENPLE…SQKPEDILAQ (351 aa)) form a disordered region. 3 stretches are compositionally biased toward acidic residues: residues 17–45 (EMEE…EEEE), 91–162 (EKEE…EEDA), and 176–189 (ESQE…EWVE). Over residues 190–199 (KEEQREGEEV) the composition is skewed to basic and acidic residues. Acidic residues predominate over residues 212–228 (EEEGWEEEKSGEEEKSE). The span at 229-257 (ESERSKERGGEEEGQEKEEAEHEGEREEG) shows a compositional bias: basic and acidic residues. Acidic residues predominate over residues 269 to 280 (REEEEEEEDTET). 2 stretches are compositionally biased toward basic and acidic residues: residues 281-297 (TETK…EKQN) and 331-351 (NSMK…ILAQ). 14 WD repeats span residues 484–526 (PVHT…IWKW), 534–574 (ACTL…CWFE), 585–624 (VLTE…VWDI), 643–678 (PRKL…FYDH), 681–741 (SVVN…VYHM), 745–785 (GTKL…VWDF), 791–828 (LFSR…ILDA), 838–874 (PFKY…MVVV), 881–924 (WEYL…EYNL), 935–975 (LDVH…LFNA), 981–1027 (RKTL…ILPV), 1033–1071 (KTCA…QWKI), 1109–1149 (YFYY…FYPS), and 1169–1209 (GKLI…GYTN).

The protein resides in the cytoplasm. It is found in the cytoskeleton. It localises to the cilium axoneme. The protein localises to the cell projection. Its subcellular location is the cilium. The protein resides in the flagellum. In terms of biological role, involved in spermatozoa motility. May also regulate cilium motility through its role in the assembly of the axonemal radial spokes. The chain is Cilia- and flagella-associated protein 251 from Mus musculus (Mouse).